We begin with the raw amino-acid sequence, 317 residues long: MYDWLNALPKAELHLHLEGSLEPELLFALAERNRIALPWNDVEALRKAYAFNNLQEFLDLYYRGADVLRTEQDFYDLTWAYLLRCKEQNVIHTEPFFDPQTHTDRGIAFEVVLAGITGALKDGKSKLGVDSGLILSFLRHLSEDEAEKTLDQALPFRDAFVAVGLDSSEMGHPPSKFQRVFDRARNEGFLTVAHAGEEGPPEYIWEALDLLKIQRIDHGVRAIEDERLMQRIIDEQIPLTVCPLSNTKLCVFDDMAQHNILDMLERGVKVTVNSDDPAYFGGYVTENFHALHTHLGMTEDQARRLAQNSLDARLVKP.

Residues His-14, His-16, and His-194 each contribute to the Zn(2+) site. Glu-197 functions as the Proton donor in the catalytic mechanism. Asp-275 is a Zn(2+) binding site. Asp-276 contributes to the substrate binding site.

This sequence belongs to the metallo-dependent hydrolases superfamily. Adenosine and AMP deaminases family. Adenine deaminase type 2 subfamily. Requires Zn(2+) as cofactor.

The enzyme catalyses adenine + H2O + H(+) = hypoxanthine + NH4(+). Functionally, catalyzes the hydrolytic deamination of adenine to hypoxanthine. Plays an important role in the purine salvage pathway and in nitrogen catabolism. The protein is Adenine deaminase of Pseudomonas syringae pv. tomato (strain ATCC BAA-871 / DC3000).